Here is a 208-residue protein sequence, read N- to C-terminus: Pyridoxine/pyridoxamine 5'-phosphate oxidase (208 aa).

FMN contacts are provided by residues 55–60 (RMVLLK), 70–71 (YT), K77, and Q99. K60 serves as a coordination point for substrate. Substrate contacts are provided by Y117, R121, and S125. FMN contacts are provided by residues 134–135 (QS) and W180. Residue 186 to 188 (RIH) participates in substrate binding. FMN is bound at residue R190.

This sequence belongs to the pyridoxamine 5'-phosphate oxidase family. Homodimer. The cofactor is FMN.

The catalysed reaction is pyridoxamine 5'-phosphate + O2 + H2O = pyridoxal 5'-phosphate + H2O2 + NH4(+). It catalyses the reaction pyridoxine 5'-phosphate + O2 = pyridoxal 5'-phosphate + H2O2. It participates in cofactor metabolism; pyridoxal 5'-phosphate salvage; pyridoxal 5'-phosphate from pyridoxamine 5'-phosphate: step 1/1. It functions in the pathway cofactor metabolism; pyridoxal 5'-phosphate salvage; pyridoxal 5'-phosphate from pyridoxine 5'-phosphate: step 1/1. Its function is as follows. Catalyzes the oxidation of either pyridoxine 5'-phosphate (PNP) or pyridoxamine 5'-phosphate (PMP) into pyridoxal 5'-phosphate (PLP). This chain is Pyridoxine/pyridoxamine 5'-phosphate oxidase, found in Pelagibacter ubique (strain HTCC1062).